A 544-amino-acid polypeptide reads, in one-letter code: High affinity immunoglobulin alpha and immunoglobulin mu Fc receptor (544 aa).

A signal peptide spans 1-16; it reads MPLFLILCLLQGSSFA. At 17-462 the chain is on the extracellular side; that stretch reads LPQKRPHPRW…TFPEDESSSR (446 aa). The Ig-like V-type domain maps to 61 to 169; that stretch reads PNALKGSRLV…NMLFLSMNLT (109 aa). Residues 75–97 are mediates immunoglobulin Fc fragment-binding; the sequence is GGAVTIQCHYAPSSVNRHQRKYW. Cysteine 82 and cysteine 153 are disulfide-bonded. Asparagine 167 is a glycosylation site (N-linked (GlcNAc...) asparagine). The tract at residues 218 to 325 is disordered; the sequence is DTVASTPGTS…TTKADRPRED (108 aa). Composition is skewed to polar residues over residues 220 to 232 and 280 to 291; these read VAST…TTAS and ASKSRSMSNTTE. Positions 307–325 are enriched in basic and acidic residues; that stretch reads ASKDRREITTTKADRPRED. The helical transmembrane segment at 463 to 483 threads the bilayer; the sequence is TLAPVSTMLALFMLMALVLLQ. Topologically, residues 484 to 544 are cytoplasmic; it reads RKLRRRRTSQ…LTAPERNPGP (61 aa). The tract at residues 511–544 is disordered; it reads PQPDQLPHVERKMLQDDSLPAGASLTAPERNPGP.

Interacts with IGHM; this interaction facilitates the endocytosis of IgM-coated microbes or IgM-antigen immune complexes. In terms of processing, N-glycosylated.

The protein localises to the cell membrane. In terms of biological role, functions as a receptor for the Fc fragment of IgA and IgM. Binds IgA and IgM with high affinity and mediates their endocytosis. May function in the immune response to microbes mediated by IgA and IgM. The chain is High affinity immunoglobulin alpha and immunoglobulin mu Fc receptor (FCAMR) from Pongo abelii (Sumatran orangutan).